We begin with the raw amino-acid sequence, 524 residues long: mRNA cap guanine-N(7) methyltransferase (524 aa).

The tract at residues 1–155 (MSDKEAGVAS…DKKRAHDEAE (155 aa)) is disordered. The segment covering 19–40 (NKDEVDVKNTEEHSKQESKSDI) has biased composition (basic and acidic residues). Residues 68–77 (NNKVISSVYN) are compositionally biased toward polar residues. Basic and acidic residues predominate over residues 90 to 99 (KTTDKYDKYG). Positions 100-112 (SRSTPIATPTAPV) are enriched in polar residues. Positions 214 to 522 (SPIYKLRNFN…FYIGFVFEKL (309 aa)) constitute an mRNA cap 0 methyltransferase domain. 223–224 (NN) lines the mRNA pocket. Positions 227, 251, 273, 319, 349, and 354 each coordinate S-adenosyl-L-methionine.

Belongs to the class I-like SAM-binding methyltransferase superfamily. mRNA cap 0 methyltransferase family.

The protein localises to the nucleus. It carries out the reaction a 5'-end (5'-triphosphoguanosine)-ribonucleoside in mRNA + S-adenosyl-L-methionine = a 5'-end (N(7)-methyl 5'-triphosphoguanosine)-ribonucleoside in mRNA + S-adenosyl-L-homocysteine. In terms of biological role, responsible for methylating the 5'-cap structure of mRNAs. The chain is mRNA cap guanine-N(7) methyltransferase (ABD1) from Debaryomyces hansenii (strain ATCC 36239 / CBS 767 / BCRC 21394 / JCM 1990 / NBRC 0083 / IGC 2968) (Yeast).